The sequence spans 343 residues: L-idonate 5-dehydrogenase (NAD(P)(+)) (343 aa).

Residues Cys40, His65, Cys93, Cys96, Cys99, Cys107, and Glu153 each contribute to the Zn(2+) site.

This sequence belongs to the zinc-containing alcohol dehydrogenase family. Zn(2+) serves as cofactor.

It catalyses the reaction L-idonate + NADP(+) = 5-dehydro-D-gluconate + NADPH + H(+). It carries out the reaction L-idonate + NAD(+) = 5-dehydro-D-gluconate + NADH + H(+). The protein operates within carbohydrate acid metabolism; L-idonate degradation. Its function is as follows. Catalyzes the NADH/NADPH-dependent oxidation of L-idonate to 5-ketogluconate (5KG). This is L-idonate 5-dehydrogenase (NAD(P)(+)) (idnD) from Escherichia coli (strain K12).